The sequence spans 1521 residues: Retroelement silencing factor 1 (1521 aa).

A Glycyl lysine isopeptide (Lys-Gly) (interchain with G-Cter in SUMO2) cross-link involves residue lysine 223. The tract at residues 621–640 is disordered; the sequence is EKQHKPIQGDPDIADSSLGK. Residue serine 910 is modified to Phosphoserine. The residue at position 996 (threonine 996) is a Phosphothreonine. 2 stretches are compositionally biased toward polar residues: residues 1093 to 1105 and 1124 to 1142; these read KNMPFSKQASQES and LSSNTDPCRSNTSSVQSVS. 3 disordered regions span residues 1093 to 1147, 1204 to 1230, and 1312 to 1335; these read KNMP…EKKK, ERASVQEKTVPSPESSDPKGSSSKSTR, and EASRTHSVSNNNKGKFDGKQPDKM. At serine 1142 the chain carries Phosphoserine. Residues 1214-1228 are compositionally biased toward low complexity; that stretch reads PSPESSDPKGSSSKS. The segment covering 1325–1335 has biased composition (basic and acidic residues); it reads GKFDGKQPDKM. A Glycyl lysine isopeptide (Lys-Gly) (interchain with G-Cter in SUMO2) cross-link involves residue lysine 1411. 2 disordered regions span residues 1425-1444 and 1457-1485; these read DKQDCPGPGPEKEQAPVQVS and IPTRTKMPESSQRDSADSRLSKRSLSADE. Residues 1467–1476 show a composition bias toward basic and acidic residues; that stretch reads SQRDSADSRL. Phosphoserine occurs at positions 1482 and 1514.

Interacts with SETDB1.

The protein localises to the nucleus. Functionally, plays a role in the regulation of imprinted gene expression, regulates repressive epigenetic modifications associated with SETDB1. Required for the recruitment or accumulation of SETDB1 to the endogenous retroviruses (ERVs) and maintenance of repressive chromatin configuration, contributing to a subset of the SETDB1-dependent ERV silencing in embryonic stem cells. The protein is Retroelement silencing factor 1 of Mus musculus (Mouse).